The sequence spans 31 residues: Antifungal protein 1 (31 aa).

It is found in the secreted. Antifungal activity against C.albicans ATCC 76615. This chain is Antifungal protein 1, found in Musca domestica (House fly).